The following is a 607-amino-acid chain: Bifunctional endo-1,4-beta-xylanase A (607 aa).

Positions 1–18 are cleaved as a signal peptide; that stretch reads MRTIKFFFAVAIATVAKA. Residues 35–242 form the GH11 1 domain; the sequence is NGQTQHKGVA…SSGIADVTKL (208 aa). E141 functions as the Nucleophile in the catalytic mechanism. Catalysis depends on E223, which acts as the Proton donor. The segment covering 248–272 has biased composition (polar residues); that stretch reads QKGSNPAPTSTGTVPSSSAGGSTAN. Residues 248–284 form a disordered region; sequence QKGSNPAPTSTGTVPSSSAGGSTANGKKFTVGNGQNQ. A GH11 2 domain is found at 280-487; the sequence is NGQNQHKGVN…SSGVADVTLL (208 aa). The active-site Nucleophile is E386. The Proton donor role is filled by E474. The interval 493-514 is disordered; the sequence is PKGSSPATSAAPRTTTRTTTRT. Residues 496–514 show a composition bias toward low complexity; it reads SSPATSAAPRTTTRTTTRT. CBM10 domains follow at residues 523–563 and 566–606; these read KCSA…CGCG and QCSS…CGCG.

It belongs to the glycosyl hydrolase 11 (cellulase G) family.

It catalyses the reaction Endohydrolysis of (1-&gt;4)-beta-D-xylosidic linkages in xylans.. It participates in glycan degradation; xylan degradation. Its function is as follows. Hydrolyzes xylans into xylobiose and xylose. This chain is Bifunctional endo-1,4-beta-xylanase A (XYNA), found in Neocallimastix patriciarum (Rumen fungus).